The primary structure comprises 195 residues: Imidazoleglycerol-phosphate dehydratase (195 aa).

Belongs to the imidazoleglycerol-phosphate dehydratase family.

Its subcellular location is the cytoplasm. It catalyses the reaction D-erythro-1-(imidazol-4-yl)glycerol 3-phosphate = 3-(imidazol-4-yl)-2-oxopropyl phosphate + H2O. It functions in the pathway amino-acid biosynthesis; L-histidine biosynthesis; L-histidine from 5-phospho-alpha-D-ribose 1-diphosphate: step 6/9. This is Imidazoleglycerol-phosphate dehydratase from Geobacter metallireducens (strain ATCC 53774 / DSM 7210 / GS-15).